Consider the following 290-residue polypeptide: ATP phosphoribosyltransferase (290 aa).

It belongs to the ATP phosphoribosyltransferase family. Long subfamily. Mg(2+) is required as a cofactor.

The protein localises to the cytoplasm. It carries out the reaction 1-(5-phospho-beta-D-ribosyl)-ATP + diphosphate = 5-phospho-alpha-D-ribose 1-diphosphate + ATP. It functions in the pathway amino-acid biosynthesis; L-histidine biosynthesis; L-histidine from 5-phospho-alpha-D-ribose 1-diphosphate: step 1/9. Feedback inhibited by histidine. In terms of biological role, catalyzes the condensation of ATP and 5-phosphoribose 1-diphosphate to form N'-(5'-phosphoribosyl)-ATP (PR-ATP). Has a crucial role in the pathway because the rate of histidine biosynthesis seems to be controlled primarily by regulation of HisG enzymatic activity. The protein is ATP phosphoribosyltransferase (hisG) of Saccharolobus solfataricus (strain ATCC 35092 / DSM 1617 / JCM 11322 / P2) (Sulfolobus solfataricus).